A 105-amino-acid polypeptide reads, in one-letter code: uncharacterized protein (105 aa).

The first 24 residues, 1–24 (MYWPCLVITPFTVGESFCLLLSLG), serve as a signal peptide directing secretion.

This is an uncharacterized protein from Saccharomyces cerevisiae (strain ATCC 204508 / S288c) (Baker's yeast).